Consider the following 1547-residue polypeptide: ABC multidrug transporter atrF (1547 aa).

2 disordered regions span residues 1–66 and 85–123; these read MADG…RRGA and TRSV…IDGD. Residues 10–19 show a composition bias toward polar residues; the sequence is SATSTTMETN. Residues 36–47 are compositionally biased toward low complexity; the sequence is SSSMTATSSELS. Residues 51-66 are compositionally biased toward basic and acidic residues; it reads RWGERDQGEPVSRRGA. The segment covering 111–123 has biased composition (acidic residues); that stretch reads KAIDEEDSTIDGD. The 243-residue stretch at 197-439 folds into the ABC transporter 1 domain; that stretch reads IPQLRFGKQP…FVNLGFHCPE (243 aa). 2 N-linked (GlcNAc...) asparagine glycosylation sites follow: Asn-299 and Asn-363. A run of 7 helical transmembrane segments spans residues 552 to 572, 586 to 606, 635 to 655, 657 to 677, 698 to 718, 722 to 742, and 804 to 824; these read LYTK…LFYG, ALFF…MPAV, FPAI…MTGL, VTAS…FSIT, GIAL…QGLI, IWFG…AVLT, and FGVV…AAEF. One can recognise an ABC transporter 2 domain in the interval 892 to 1130; sequence FTWSNVEYTV…DVIKYFADRG (239 aa). N-linked (GlcNAc...) asparagine glycosylation is present at Asn-905. 928–935 provides a ligand contact to ATP; sequence GASGAGKT. N-linked (GlcNAc...) asparagine glycosylation is found at Asn-980 and Asn-999. Helical transmembrane passes span 1230-1250, 1260-1280, 1309-1329, 1334-1354, 1356-1376, 1397-1417, 1491-1511, and 1520-1540; these read FVSV…GNSI, IFLI…KFYI, IPMA…PVGF, STAG…SSWG, WICA…FFFV, YWMY…SSIF, CFGI…FFIY, and FGMG…KGVF.

The protein belongs to the ABC transporter superfamily. ABCG family. PDR (TC 3.A.1.205) subfamily.

It localises to the cell membrane. The enzyme catalyses voriconazole(in) + ATP + H2O = voriconazole(out) + ADP + phosphate + H(+). It catalyses the reaction fluconazole(in) + ATP + H2O = fluconazole(out) + ADP + phosphate + H(+). Its function is as follows. Pleiotropic ABC efflux transporter involved in the basal level of azole susceptibility. Confers resistance to fluconazole and voriconazole. The sequence is that of ABC multidrug transporter atrF from Aspergillus fumigatus (strain ATCC MYA-4609 / CBS 101355 / FGSC A1100 / Af293) (Neosartorya fumigata).